A 183-amino-acid chain; its full sequence is ATP-dependent protease subunit HslV (183 aa).

Residue T12 is part of the active site. A166, C169, and T172 together coordinate Na(+).

It belongs to the peptidase T1B family. HslV subfamily. In terms of assembly, a double ring-shaped homohexamer of HslV is capped on each side by a ring-shaped HslU homohexamer. The assembly of the HslU/HslV complex is dependent on binding of ATP.

The protein localises to the cytoplasm. The enzyme catalyses ATP-dependent cleavage of peptide bonds with broad specificity.. With respect to regulation, allosterically activated by HslU binding. Its function is as follows. Protease subunit of a proteasome-like degradation complex believed to be a general protein degrading machinery. The sequence is that of ATP-dependent protease subunit HslV from Afipia carboxidovorans (strain ATCC 49405 / DSM 1227 / KCTC 32145 / OM5) (Oligotropha carboxidovorans).